The primary structure comprises 348 residues: Histidinol-phosphate aminotransferase (348 aa).

Lys211 is modified (N6-(pyridoxal phosphate)lysine).

Belongs to the class-II pyridoxal-phosphate-dependent aminotransferase family. Histidinol-phosphate aminotransferase subfamily. Homodimer. Requires pyridoxal 5'-phosphate as cofactor.

The catalysed reaction is L-histidinol phosphate + 2-oxoglutarate = 3-(imidazol-4-yl)-2-oxopropyl phosphate + L-glutamate. It participates in amino-acid biosynthesis; L-histidine biosynthesis; L-histidine from 5-phospho-alpha-D-ribose 1-diphosphate: step 7/9. The protein is Histidinol-phosphate aminotransferase of Pseudomonas entomophila (strain L48).